Here is a 316-residue protein sequence, read N- to C-terminus: Beta-ketoacyl-[acyl-carrier-protein] synthase III 1 (316 aa).

Residues cysteine 112 and histidine 243 contribute to the active site. Residues 244 to 248 (QANYR) form an ACP-binding region. The active site involves asparagine 273.

This sequence belongs to the thiolase-like superfamily. FabH family. In terms of assembly, homodimer.

Its subcellular location is the cytoplasm. The catalysed reaction is malonyl-[ACP] + acetyl-CoA + H(+) = 3-oxobutanoyl-[ACP] + CO2 + CoA. The protein operates within lipid metabolism; fatty acid biosynthesis. Catalyzes the condensation reaction of fatty acid synthesis by the addition to an acyl acceptor of two carbons from malonyl-ACP. Catalyzes the first condensation reaction which initiates fatty acid synthesis and may therefore play a role in governing the total rate of fatty acid production. Possesses both acetoacetyl-ACP synthase and acetyl transacylase activities. Its substrate specificity determines the biosynthesis of branched-chain and/or straight-chain of fatty acids. The polypeptide is Beta-ketoacyl-[acyl-carrier-protein] synthase III 1 (Vibrio vulnificus (strain YJ016)).